We begin with the raw amino-acid sequence, 243 residues long: Uridylate kinase (243 aa).

An ATP-binding site is contributed by 15-18 (KISG). Gly57 contacts UMP. ATP-binding residues include Gly58 and Arg62. UMP is bound by residues Asp77 and 138 to 145 (TGNPFFTT). ATP contacts are provided by Thr165, Phe171, and Asp174.

This sequence belongs to the UMP kinase family. In terms of assembly, homohexamer.

Its subcellular location is the cytoplasm. The catalysed reaction is UMP + ATP = UDP + ADP. Its pathway is pyrimidine metabolism; CTP biosynthesis via de novo pathway; UDP from UMP (UMPK route): step 1/1. With respect to regulation, inhibited by UTP. Catalyzes the reversible phosphorylation of UMP to UDP. In Blochmanniella floridana, this protein is Uridylate kinase.